We begin with the raw amino-acid sequence, 155 residues long: Small ribosomal subunit protein uS7cz/uS7cy (155 aa).

Belongs to the universal ribosomal protein uS7 family. Part of the 30S ribosomal subunit.

It is found in the plastid. The protein resides in the chloroplast. Its function is as follows. One of the primary rRNA binding proteins, it binds directly to 16S rRNA where it nucleates assembly of the head domain of the 30S subunit. This chain is Small ribosomal subunit protein uS7cz/uS7cy (rps7-A), found in Citrus sinensis (Sweet orange).